A 227-amino-acid chain; its full sequence is MAAKAFPPFECSYRGSLLAGVDEVGRGPLIGAVVTAAVILDPARPIPGLADSKKLTEKKRLRLYDDILENAAAWSLGRCEASEIDELNIYQATMLAMKRAVEGLSIAPEYVLVDGNRCPKWQWPSEPVIKGDSRVEAISAASILAKVTRDREMEALDVRFPGFGLAQHKGYPTPVHLEALNRLGVTPEHRRSFRPVKMALDAVGVYGGSSAPVQELNYPADLFENID.

The 190-residue stretch at 16–205 (SLLAGVDEVG…VKMALDAVGV (190 aa)) folds into the RNase H type-2 domain. D22, E23, and D114 together coordinate a divalent metal cation.

The protein belongs to the RNase HII family. Mn(2+) serves as cofactor. Mg(2+) is required as a cofactor.

The protein localises to the cytoplasm. The enzyme catalyses Endonucleolytic cleavage to 5'-phosphomonoester.. In terms of biological role, endonuclease that specifically degrades the RNA of RNA-DNA hybrids. The sequence is that of Ribonuclease HII from Marinobacter nauticus (strain ATCC 700491 / DSM 11845 / VT8) (Marinobacter aquaeolei).